A 109-amino-acid chain; its full sequence is uncharacterized protein (109 aa).

The helical transmembrane segment at 12 to 32 threads the bilayer; sequence PNILIKGVYIFVLYGMCICIV.

Its subcellular location is the membrane. This is an uncharacterized protein from Saccharomyces cerevisiae (strain ATCC 204508 / S288c) (Baker's yeast).